Reading from the N-terminus, the 222-residue chain is Phosphoribosylformylglycinamidine synthase subunit PurQ (222 aa).

In terms of domain architecture, Glutamine amidotransferase type-1 spans 3 to 222; it reads AAVVVFPGSN…RALTGALAAV (220 aa). The Nucleophile role is filled by cysteine 86. Residues histidine 194 and glutamate 196 contribute to the active site.

In terms of assembly, part of the FGAM synthase complex composed of 1 PurL, 1 PurQ and 2 PurS subunits.

The protein resides in the cytoplasm. The catalysed reaction is N(2)-formyl-N(1)-(5-phospho-beta-D-ribosyl)glycinamide + L-glutamine + ATP + H2O = 2-formamido-N(1)-(5-O-phospho-beta-D-ribosyl)acetamidine + L-glutamate + ADP + phosphate + H(+). It carries out the reaction L-glutamine + H2O = L-glutamate + NH4(+). The protein operates within purine metabolism; IMP biosynthesis via de novo pathway; 5-amino-1-(5-phospho-D-ribosyl)imidazole from N(2)-formyl-N(1)-(5-phospho-D-ribosyl)glycinamide: step 1/2. Part of the phosphoribosylformylglycinamidine synthase complex involved in the purines biosynthetic pathway. Catalyzes the ATP-dependent conversion of formylglycinamide ribonucleotide (FGAR) and glutamine to yield formylglycinamidine ribonucleotide (FGAM) and glutamate. The FGAM synthase complex is composed of three subunits. PurQ produces an ammonia molecule by converting glutamine to glutamate. PurL transfers the ammonia molecule to FGAR to form FGAM in an ATP-dependent manner. PurS interacts with PurQ and PurL and is thought to assist in the transfer of the ammonia molecule from PurQ to PurL. The protein is Phosphoribosylformylglycinamidine synthase subunit PurQ of Roseobacter denitrificans (strain ATCC 33942 / OCh 114) (Erythrobacter sp. (strain OCh 114)).